The following is a 463-amino-acid chain: Mitochondrial dynamics protein MID51 (463 aa).

The Mitochondrial intermembrane portion of the chain corresponds to 1 to 23 (MAGAGERKGKKDDNGIGTAIDFV). A helical membrane pass occupies residues 24–46 (LSNARLVLGVGGAAMLGIATLAV). Residues 47-463 (KRMYDRAISA…LSEPEVLLQT (417 aa)) are Cytoplasmic-facing. A dimerization region spans residues 49–195 (MYDRAISAPT…LSGSLYDDLQ (147 aa)). 4 positions are modified to phosphoserine: Ser-55, Ser-59, Ser-79, and Ser-94. The disordered stretch occupies residues 57 to 77 (PTSPTRLSHSGKRSWEEPNWM). An important for interaction with DNM1L region spans residues 160–169 (AAVDICAELR). Ser-187, Ser-189, and His-201 together coordinate ADP. Residues 234 to 243 (RRENPEYFPR) are important for interaction with DNM1L. Residues Ser-340, Arg-342, and Lys-368 each coordinate ADP.

It belongs to the MID49/MID51 family. Homodimer. Interacts with DNM1L.

The protein localises to the mitochondrion outer membrane. In terms of biological role, mitochondrial outer membrane protein which regulates mitochondrial fission/fusion dynamics. Promotes the recruitment and association of the fission mediator dynamin-related protein 1 (DNM1L) to the mitochondrial surface independently of the mitochondrial fission FIS1 and MFF proteins. Regulates DNM1L GTPase activity and DNM1L oligomerization. Binds ADP and can also bind GDP, although with lower affinity. Does not bind CDP, UDP, ATP, AMP or GTP. Inhibits DNM1L GTPase activity in the absence of bound ADP. Requires ADP to stimulate DNM1L GTPase activity and the assembly of DNM1L into long, oligomeric tubules with a spiral pattern, as opposed to the ring-like DNM1L oligomers observed in the absence of bound ADP. Does not require ADP for its function in recruiting DNM1L. This Rattus norvegicus (Rat) protein is Mitochondrial dynamics protein MID51 (Mief1).